The chain runs to 429 residues: Histidine--tRNA ligase (429 aa).

This sequence belongs to the class-II aminoacyl-tRNA synthetase family. As to quaternary structure, homodimer.

It is found in the cytoplasm. The enzyme catalyses tRNA(His) + L-histidine + ATP = L-histidyl-tRNA(His) + AMP + diphosphate + H(+). This Prochlorococcus marinus (strain MIT 9515) protein is Histidine--tRNA ligase.